Here is a 373-residue protein sequence, read N- to C-terminus: 3 beta-hydroxysteroid dehydrogenase/Delta 5--&gt;4-isomerase type 2 (373 aa).

Y155 functions as the Proton acceptor in the catalytic mechanism. K159 is a binding site for NAD(+). The chain crosses the membrane as a helical span at residues 288-308 (VALLYWLGFLLELVNFLLRPV).

Belongs to the 3-beta-HSD family. In terms of tissue distribution, high levels in adrenal gland, kidney and male liver. Low levels in female liver.

It is found in the endoplasmic reticulum membrane. It localises to the mitochondrion membrane. It catalyses the reaction a 3beta-hydroxy-Delta(5)-steroid + NAD(+) = a 3-oxo-Delta(5)-steroid + NADH + H(+). The catalysed reaction is a 3-oxo-Delta(5)-steroid = a 3-oxo-Delta(4)-steroid. It carries out the reaction pregnenolone + NAD(+) = pregn-5-ene-3,20-dione + NADH + H(+). The enzyme catalyses pregn-5-ene-3,20-dione = progesterone. It catalyses the reaction 3beta-hydroxyandrost-5-en-17-one + NAD(+) = androst-5-ene-3,17-dione + NADH + H(+). The catalysed reaction is androst-5-ene-3,17-dione = androst-4-ene-3,17-dione. Its pathway is lipid metabolism; steroid biosynthesis. Functionally, 3-beta-HSD is a bifunctional enzyme, that catalyzes the oxidative conversion of Delta(5)-ene-3-beta-hydroxy steroid, and the oxidative conversion of ketosteroids. The 3-beta-HSD enzymatic system plays a crucial role in the biosynthesis of all classes of hormonal steroids. In Mesocricetus auratus (Golden hamster), this protein is 3 beta-hydroxysteroid dehydrogenase/Delta 5--&gt;4-isomerase type 2 (HSD3B2).